We begin with the raw amino-acid sequence, 91 residues long: Ribonuclease P protein component 4 (91 aa).

Zn(2+)-binding residues include cysteine 55, cysteine 58, cysteine 78, and cysteine 81.

The protein belongs to the eukaryotic/archaeal RNase P protein component 4 family. Consists of a catalytic RNA component and at least 4-5 protein subunits. It depends on Zn(2+) as a cofactor.

Its subcellular location is the cytoplasm. The catalysed reaction is Endonucleolytic cleavage of RNA, removing 5'-extranucleotides from tRNA precursor.. Part of ribonuclease P, a protein complex that generates mature tRNA molecules by cleaving their 5'-ends. This chain is Ribonuclease P protein component 4, found in Thermoplasma acidophilum (strain ATCC 25905 / DSM 1728 / JCM 9062 / NBRC 15155 / AMRC-C165).